A 357-amino-acid chain; its full sequence is MFAKLENLERRFEDLEQQLASSEVFNDQDRYRKLTKAHADLKEVVDVFRRYKELRQNLADNKELLDDADPEIRSMAHEEAKSLESAIPEIEQELQLLLLPKDPLDEKNTIVEIRAGTGGEEAALFAADLFRMYSRYAEIRGWKVEILSANESDTGGYKEVIALIVGDKVYSRLKFESGTHRVQRVPATESQGRIHTSAATVAILPEAEEVDVEIRPDDIRIDVFRASGAGGQHVNKTESAVRITHMPSGIVVSCQDEKSQHKNKAKAMKVLASRLLQAEQDRQHNEMAADRRSQVGSGDRSERIRTYNFPQGRVTDHRINLTLYSLDRVMEGEAQALFDALSTHAQTEALKAQADVQ.

Gln232 is modified (N5-methylglutamine). The span at 281 to 305 (DRQHNEMAADRRSQVGSGDRSERIR) shows a compositional bias: basic and acidic residues. Residues 281–309 (DRQHNEMAADRRSQVGSGDRSERIRTYNF) are disordered.

It belongs to the prokaryotic/mitochondrial release factor family. Methylated by PrmC. Methylation increases the termination efficiency of RF1.

It localises to the cytoplasm. Peptide chain release factor 1 directs the termination of translation in response to the peptide chain termination codons UAG and UAA. This is Peptide chain release factor 1 from Nitratidesulfovibrio vulgaris (strain DSM 19637 / Miyazaki F) (Desulfovibrio vulgaris).